The sequence spans 350 residues: Protein RecA (350 aa).

Residue 67–74 (GPESSGKT) coordinates ATP.

The protein belongs to the RecA family.

It is found in the cytoplasm. In terms of biological role, can catalyze the hydrolysis of ATP in the presence of single-stranded DNA, the ATP-dependent uptake of single-stranded DNA by duplex DNA, and the ATP-dependent hybridization of homologous single-stranded DNAs. It interacts with LexA causing its activation and leading to its autocatalytic cleavage. This Baumannia cicadellinicola subsp. Homalodisca coagulata protein is Protein RecA.